The chain runs to 427 residues: Gamma-glutamyl phosphate reductase (427 aa).

The protein belongs to the gamma-glutamyl phosphate reductase family.

The protein localises to the cytoplasm. The catalysed reaction is L-glutamate 5-semialdehyde + phosphate + NADP(+) = L-glutamyl 5-phosphate + NADPH + H(+). The protein operates within amino-acid biosynthesis; L-proline biosynthesis; L-glutamate 5-semialdehyde from L-glutamate: step 2/2. Functionally, catalyzes the NADPH-dependent reduction of L-glutamate 5-phosphate into L-glutamate 5-semialdehyde and phosphate. The product spontaneously undergoes cyclization to form 1-pyrroline-5-carboxylate. The protein is Gamma-glutamyl phosphate reductase of Brucella melitensis biotype 2 (strain ATCC 23457).